Here is a 156-residue protein sequence, read N- to C-terminus: Small ribosomal subunit protein uS7 (156 aa).

Belongs to the universal ribosomal protein uS7 family. Part of the 30S ribosomal subunit. Contacts proteins S9 and S11.

One of the primary rRNA binding proteins, it binds directly to 16S rRNA where it nucleates assembly of the head domain of the 30S subunit. Is located at the subunit interface close to the decoding center, probably blocks exit of the E-site tRNA. The polypeptide is Small ribosomal subunit protein uS7 (Bacillus velezensis (strain DSM 23117 / BGSC 10A6 / LMG 26770 / FZB42) (Bacillus amyloliquefaciens subsp. plantarum)).